Here is a 396-residue protein sequence, read N- to C-terminus: L-lactate dehydrogenase (396 aa).

Residues 1-380 (MIISAASDYR…TQDSLVQGLG (380 aa)) enclose the FMN hydroxy acid dehydrogenase domain. Y24 is a substrate binding site. The FMN site is built by S106 and Q127. Y129 contributes to the substrate binding site. T155 is a binding site for FMN. R164 provides a ligand contact to substrate. K251 is a binding site for FMN. H275 functions as the Proton acceptor in the catalytic mechanism. R278 is a binding site for substrate. FMN is bound at residue 306–330 (DSGIRNGLDVVRMIALGADTVLLGR).

The protein belongs to the FMN-dependent alpha-hydroxy acid dehydrogenase family. Requires FMN as cofactor.

The protein resides in the cell inner membrane. It carries out the reaction (S)-lactate + A = pyruvate + AH2. Its function is as follows. Catalyzes the conversion of L-lactate to pyruvate. Is coupled to the respiratory chain. This is L-lactate dehydrogenase from Shigella boydii serotype 18 (strain CDC 3083-94 / BS512).